The chain runs to 388 residues: Chaperone protein DnaJ 1 (388 aa).

A J domain is found at 10–74 (DFYKELGVSS…VKRKEYDETR (65 aa)). The CR-type zinc finger occupies 159–237 (GVAMPLRLTS…CKGTGVTTRT (79 aa)). The Zn(2+) site is built by cysteine 172, cysteine 175, cysteine 189, cysteine 192, cysteine 211, cysteine 214, cysteine 225, and cysteine 228. CXXCXGXG motif repeat units follow at residues 172–179 (CTNCHGSG), 189–196 (CSTCNGSG), 211–218 (CTECRGSG), and 225–232 (CEECKGTG).

It belongs to the DnaJ family. As to quaternary structure, homodimer. The cofactor is Zn(2+).

It localises to the cytoplasm. Participates actively in the response to hyperosmotic and heat shock by preventing the aggregation of stress-denatured proteins and by disaggregating proteins, also in an autonomous, DnaK-independent fashion. Unfolded proteins bind initially to DnaJ; upon interaction with the DnaJ-bound protein, DnaK hydrolyzes its bound ATP, resulting in the formation of a stable complex. GrpE releases ADP from DnaK; ATP binding to DnaK triggers the release of the substrate protein, thus completing the reaction cycle. Several rounds of ATP-dependent interactions between DnaJ, DnaK and GrpE are required for fully efficient folding. Also involved, together with DnaK and GrpE, in the DNA replication of plasmids through activation of initiation proteins. This Mycobacterium leprae (strain TN) protein is Chaperone protein DnaJ 1.